The sequence spans 360 residues: Threonine synthase (360 aa).

Lys69 is modified (N6-(pyridoxal phosphate)lysine). Pyridoxal 5'-phosphate-binding positions include Asn95, 196–200 (GNAGN), and Thr326.

It belongs to the threonine synthase family. Homodimer. The cofactor is pyridoxal 5'-phosphate.

The catalysed reaction is O-phospho-L-homoserine + H2O = L-threonine + phosphate. It participates in amino-acid biosynthesis; L-threonine biosynthesis; L-threonine from L-aspartate: step 5/5. Catalyzes the gamma-elimination of phosphate from L-phosphohomoserine and the beta-addition of water to produce L-threonine. This chain is Threonine synthase (thrC), found in Mycobacterium bovis (strain ATCC BAA-935 / AF2122/97).